The sequence spans 529 residues: MTSETVIAPSLSTAQNDGTFTYDKVKSTAKERKHLNLKNPSDANEIKSKIWNYYSLSELIQYLGQKENDDFKYKRITLQFPDNLICDSATIVHELQRELNIVPQANQDTGESNTAQRVWILADTSYSACCVDEVAAEHVRSDLVVHFGDACLNEIDKLQAVFVLGKPTLDVDAIVKQIKTAYSTEQKVVLMSDAPHTYLLPEIAKQLPDYDILIADLPKTSRAKIIGYTPPPTGHKKFNRVFNTDTVEFGKYELFHITSPESPRLLQLTTNFASVTTYDPISGTVSTGPFPNLMRRYKYVHQARMAGTVGILVNTLSLANTKVLLNTIKEKIKEAGKKHYIFVVGKPNVAKLANFESVDIWCILGCDHQGIIIDQINEYYKPIVTPYELLLGLSDELSWTGKWVVDYKSVLEEYGNEVIQQNEDPDTDEDLPPVFDPVTGRYVSTSKPLRQINHLMVTSSEQGGVDDHDNQLVKRFSNAVAIKGTVSTSAIHLQNRHWTGLGSDYTEDENATGALVEDGRKGIARGYDI.

Residues Cys-130, Cys-151, and Cys-366 each coordinate [4Fe-4S] cluster.

This sequence belongs to the DPH1/DPH2 family. DPH2 subfamily. As to quaternary structure, component of the 2-(3-amino-3-carboxypropyl)histidine synthase complex composed of DPH1, DPH2, DPH3 and a NADH-dependent reductase, predominantly CBR1. It depends on [4Fe-4S] cluster as a cofactor.

It localises to the cytoplasm. Its pathway is protein modification; peptidyl-diphthamide biosynthesis. In terms of biological role, required for the first step of diphthamide biosynthesis, a post-translational modification of histidine which occurs in elongation factor 2. DPH1 and DPH2 transfer a 3-amino-3-carboxypropyl (ACP) group from S-adenosyl-L-methionine (SAM) to a histidine residue, the reaction is assisted by a reduction system comprising DPH3 and a NADH-dependent reductase, predominantly CBR1. Facilitates the reduction of the catalytic iron-sulfur cluster found in the DPH1 subunit. This is 2-(3-amino-3-carboxypropyl)histidine synthase subunit 2-1 (DPH2) from Candida albicans (strain SC5314 / ATCC MYA-2876) (Yeast).